A 122-amino-acid polypeptide reads, in one-letter code: Photosystem II extrinsic protein U (122 aa).

A signal peptide spans 1–26 (MKTIVRLFAILMVLISSVGFVGSAVA).

This sequence belongs to the PsbU family. In terms of assembly, PSII is composed of 1 copy each of membrane proteins PsbA, PsbB, PsbC, PsbD, PsbE, PsbF, PsbH, PsbI, PsbJ, PsbK, PsbL, PsbM, PsbT, PsbX, PsbY, PsbZ, Psb30/Ycf12, peripheral proteins PsbO, CyanoQ (PsbQ), PsbU, PsbV and a large number of cofactors. It forms dimeric complexes.

It localises to the cellular thylakoid membrane. One of the extrinsic, lumenal subunits of photosystem II (PSII). PSII is a light-driven water plastoquinone oxidoreductase, using light energy to abstract electrons from H(2)O, generating a proton gradient subsequently used for ATP formation. The extrinsic proteins stabilize the structure of photosystem II oxygen-evolving complex (OEC), the ion environment of oxygen evolution and protect the OEC against heat-induced inactivation. This is Photosystem II extrinsic protein U from Crocosphaera subtropica (strain ATCC 51142 / BH68) (Cyanothece sp. (strain ATCC 51142)).